The primary structure comprises 198 residues: Prostamide/prostaglandin F synthase (198 aa).

Phosphotyrosine is present on tyrosine 108.

It belongs to the peroxiredoxin-like PRXL2 family. Prostamide/prostaglandin F synthase subfamily.

Its subcellular location is the cytoplasm. It localises to the cytosol. It catalyses the reaction prostaglandin H2 + [thioredoxin]-dithiol = prostaglandin F2alpha + [thioredoxin]-disulfide. It carries out the reaction prostamide F2alpha + [thioredoxin]-disulfide = prostamide H2 + [thioredoxin]-dithiol. Functionally, catalyzes the reduction of prostaglandin-ethanolamide H(2) (prostamide H(2)) to prostamide F(2alpha) with NADPH as proton donor. Also able to reduce prostaglandin H(2) to prostaglandin F(2alpha). The sequence is that of Prostamide/prostaglandin F synthase (PRXL2B) from Pongo abelii (Sumatran orangutan).